The primary structure comprises 53 residues: Large ribosomal subunit protein bL33 (53 aa).

Belongs to the bacterial ribosomal protein bL33 family.

This Malacoplasma penetrans (strain HF-2) (Mycoplasma penetrans) protein is Large ribosomal subunit protein bL33.